A 169-amino-acid polypeptide reads, in one-letter code: Phosphopantetheine adenylyltransferase (169 aa).

Position 14 (Thr14) interacts with substrate. Residues 14-15 (TF) and His22 each bind ATP. Residues Lys46, Leu78, and Arg92 each contribute to the substrate site. Residues 93–95 (GLR), Glu103, and 128–134 (HSFISSS) each bind ATP.

The protein belongs to the bacterial CoaD family. Homohexamer. Requires Mg(2+) as cofactor.

The protein localises to the cytoplasm. It catalyses the reaction (R)-4'-phosphopantetheine + ATP + H(+) = 3'-dephospho-CoA + diphosphate. The protein operates within cofactor biosynthesis; coenzyme A biosynthesis; CoA from (R)-pantothenate: step 4/5. Functionally, reversibly transfers an adenylyl group from ATP to 4'-phosphopantetheine, yielding dephospho-CoA (dPCoA) and pyrophosphate. This Stenotrophomonas maltophilia (strain K279a) protein is Phosphopantetheine adenylyltransferase.